Reading from the N-terminus, the 693-residue chain is TBC1 domain family member 14 (693 aa).

Ser91 bears the Phosphoserine mark. Disordered stretches follow at residues 108 to 130 (PSCAPPAPSSTEREQSVRKSSTF) and 271 to 304 (NAQKDSKRIQKEYEDKAGRPSKPPSPKQNVRKNL). Residues 271 to 288 (NAQKDSKRIQKEYEDKAG) are compositionally biased toward basic and acidic residues. Ser295 is modified (phosphoserine). The Rab-GAP TBC domain maps to 401–611 (GIPPSVRGKV…RIWDVFCRDG (211 aa)).

Interacts with ULK1. May interact with RAB11A and RAB11B, but does not exhibit any GTPase-activating activity toward these proteins. Interacts with TRAPPC8.

Its subcellular location is the golgi apparatus. The protein resides in the cis-Golgi network. It is found in the trans-Golgi network. Its function is as follows. Plays a role in the regulation of starvation-induced autophagosome formation. Together with the TRAPPIII complex, regulates a constitutive trafficking step from peripheral recycling endosomes to the early Golgi, maintaining the cycling pool of ATG9 required for initiation of autophagy. This Homo sapiens (Human) protein is TBC1 domain family member 14 (TBC1D14).